Reading from the N-terminus, the 93-residue chain is Stromal cell-derived factor 1 (93 aa).

Positions 1 to 21 (MDAKVVAVLALVLAALCLSDG) are cleaved as a signal peptide. A Receptor activation motif motif is present at residues 22-23 (KP). The receptor and heparin binding stretch occupies residues 29-33 (RCPCR). Cystine bridges form between cysteine 30–cysteine 55 and cysteine 32–cysteine 71. Receptor binding stretches follow at residues 39–41 (VAR), 48–50 (KIL), and 60–70 (VARLKNNNRQV). Residues 41–51 (RANVKHLKILN), arginine 62, glutamine 69, and lysine 85 each bind heparin.

This sequence belongs to the intercrine alpha (chemokine CxC) family. In terms of assembly, monomer or homodimer; in equilibrium. Dimer formation is induced by non acidic pH and the presence of multivalent anions, and by binding to CXCR4 or heparin. Monomeric form is required for full chemotactic activity and resistance to ischemia/reperfusion injury, whereas the dimeric form acts as a partial agonist of CXCR4, stimulating Ca2+ mobilization but with no chemotactic activity and instead acts as a selective antagonist that blocks chemotaxis induced by the monomeric form. Interacts with the N-terminus of ACKR3. Interacts with integrin subunit ITGB3 (via the allosteric site (site 2)). Interacts with TNFAIP6 (via Link domain).

Its subcellular location is the secreted. Its function is as follows. Chemoattractant active on T-lymphocytes and monocytes but not neutrophils. Activates the C-X-C chemokine receptor CXCR4 to induce a rapid and transient rise in the level of intracellular calcium ions and chemotaxis. Also binds to atypical chemokine receptor ACKR3, which activates the beta-arrestin pathway and acts as a scavenger receptor for SDF-1. Acts as a positive regulator of monocyte migration and a negative regulator of monocyte adhesion via the LYN kinase. Binds to the allosteric site (site 2) of integrins and activates integrins ITGAV:ITGB3, ITGA4:ITGB1 and ITGA5:ITGB1 in a CXCR4-independent manner. Stimulates migration of monocytes and T-lymphocytes through its receptors, CXCR4 and ACKR3, and decreases monocyte adherence to surfaces coated with ICAM-1, a ligand for beta-2 integrins. SDF1A/CXCR4 signaling axis inhibits beta-2 integrin LFA-1 mediated adhesion of monocytes to ICAM-1 through LYN kinase. Plays a protective role after myocardial infarction. Has several critical functions during embryonic development; required for B-cell lymphopoiesis, myelopoiesis in bone marrow and heart ventricular septum formation. Stimulates the proliferation of bone marrow-derived B-cell progenitors in the presence of IL7 as well as growth of stromal cell-dependent pre-B-cells. In Felis catus (Cat), this protein is Stromal cell-derived factor 1 (CXCL12).